A 492-amino-acid chain; its full sequence is MAKDQIRNGRLEGERSALIEQYLSSMEADKQIAESDIRVDIAHILMLRKQNLIDGASAKKLLTALLGYLENGLPENAFDMTREDIHAGIEAQLIADAGSDAGGRMHLGRSRNDEVATCLRMRTRELLIDTLTALFELRQSLISRAEEHTTTIMPGFTHLQHAQPTTLAHYLLAYESLFARDTSRLFDAYTRVNISPLGSAAFAGTGFPIDRSLTAEYLGFANPMENSMDAVANRDFIVETLSDLAILMTNISRICEELILWSTSFVKFVNLNDAYCSTSSIMPQKKNPDTLEIMRAKSAAVIGELTAALTLIKSLPMSYNRDLQDLNPHLWNAFRQTNMSLPLLAEIISTAEFNVPVMKKQAVVGNTTATELADFLVREYNIPFRTAHNIVGRAVKLGSLDLDIVDSVAKELANISLKEKGLTEETIKKVLHPVTILRQKQSFGSPNPKMMKKAVKVADIRLVQDQVTGDILQDQLRDADEKMKTAIQELDL.

It belongs to the lyase 1 family. Argininosuccinate lyase subfamily.

It localises to the cytoplasm. The catalysed reaction is 2-(N(omega)-L-arginino)succinate = fumarate + L-arginine. Its pathway is amino-acid biosynthesis; L-arginine biosynthesis; L-arginine from L-ornithine and carbamoyl phosphate: step 3/3. The polypeptide is Argininosuccinate lyase (Methanocorpusculum labreanum (strain ATCC 43576 / DSM 4855 / Z)).